The primary structure comprises 489 residues: uncharacterized protein (489 aa).

Disordered regions lie at residues 1-94 (MIEE…GSLD), 109-229 (NRNQ…SDDD), 300-389 (DDNI…TSIQ), and 428-461 (SESG…TLVK). Composition is skewed to low complexity over residues 43–53 (LLVQQSNQSVK) and 64–77 (SNGF…NIHD). Residues 121–138 (NFSEDDEDDDAEDDDSSD) show a composition bias toward acidic residues. Positions 144–154 (KKNKPKKPSKL) are enriched in basic residues. Over residues 155–164 (MKHDSVDGKN) the composition is skewed to basic and acidic residues. Positions 173-199 (SKKKVQHQLKEKNKKKGIKNDKKKSKP) are enriched in basic residues. Acidic residues predominate over residues 308–343 (NDNDNDNDDDNDNDNDNDNDNDNDNDDDENGEDNGE). Composition is skewed to low complexity over residues 344 to 389 (DLNI…TSIQ) and 433 to 449 (SISS…SSKS).

This is an uncharacterized protein from Dictyostelium discoideum (Social amoeba).